The primary structure comprises 982 residues: Glutamate [NMDA] receptor subunit 1 (982 aa).

The signal sequence occupies residues 1 to 22 (MRVAFIYRWLLCGAAIVNVLVA). The Extracellular portion of the chain corresponds to 23-568 (QRHTASDNPS…TLVSFLQPFS (546 aa)). N-linked (GlcNAc...) asparagine glycans are attached at residues N253, N309, N340, N392, N449, N476, and N496. Glycine is bound by residues 525-527 (PLT) and R532. The chain crosses the membrane as a helical span at residues 569 to 589 (NTLWILVMVSVHVVALVLYLL). Topologically, residues 590 to 646 (DRFSPFGRFKLSHSDSNEEKALNLSSAVWFAWGVLLNSGIGEGTPRSFSARVLGMVW) are cytoplasmic. Residues 647–667 (AGFAMIIVASYTANLAAFLVL) form a helical membrane-spanning segment. At 668–826 (ERPKTKLSGI…KTPNTLGLKN (159 aa)) the chain is on the extracellular side. N-linked (GlcNAc...) asparagine glycosylation occurs at N688. The glycine site is built by S698 and D742. The helical transmembrane segment at 827–847 (MAGVFILVGVGIAGGVGLIII) threads the bilayer. Topologically, residues 848-982 (EVIYKKHQVK…YTSDVSHLVV (135 aa)) are cytoplasmic. Residues 948–982 (LTASQLGLGKTRPQQNPLPPRYSPGYTSDVSHLVV) are disordered. Residues 972–982 (GYTSDVSHLVV) show a composition bias toward polar residues.

It belongs to the glutamate-gated ion channel (TC 1.A.10.1) family. Forms a heteromeric NMDA channel with Nmdar2.

The protein localises to the cell membrane. Its subcellular location is the postsynaptic cell membrane. The protein resides in the postsynaptic density. NMDA receptor subtype of glutamate-gated ion channels with high calcium permeability and voltage-dependent sensitivity to magnesium. Mediated by glycine. This protein plays a key role in synaptic plasticity, synaptogenesis, excitotoxicity, memory acquisition and learning. It mediates neuronal functions in glutamate neurotransmission. Is involved in the cell surface targeting of NMDA receptors. Plays a role in associative learning and in long-term memory consolidation. This Drosophila grimshawi (Hawaiian fruit fly) protein is Glutamate [NMDA] receptor subunit 1.